A 487-amino-acid polypeptide reads, in one-letter code: Glutamate--tRNA ligase (487 aa).

Positions 12 to 22 (PSPTGYMHVGN) match the 'HIGH' region motif. The 'KMSKS' region motif lies at 249–253 (KLSKR). Residue Lys-252 coordinates ATP.

This sequence belongs to the class-I aminoacyl-tRNA synthetase family. Glutamate--tRNA ligase type 1 subfamily. In terms of assembly, monomer.

Its subcellular location is the cytoplasm. The catalysed reaction is tRNA(Glu) + L-glutamate + ATP = L-glutamyl-tRNA(Glu) + AMP + diphosphate. Its function is as follows. Catalyzes the attachment of glutamate to tRNA(Glu) in a two-step reaction: glutamate is first activated by ATP to form Glu-AMP and then transferred to the acceptor end of tRNA(Glu). This is Glutamate--tRNA ligase from Clostridium novyi (strain NT).